We begin with the raw amino-acid sequence, 717 residues long: UvrABC system protein C (717 aa).

The GIY-YIG domain maps to 16–95 (DSPGVYKFRD…IKEFDPRFNV (80 aa)). A UVR domain is found at 208-243 (GTYIRRLEKDMMQAAEEMEYERAARLRDDAEALKRA). Positions 467-548 (ERTGEWEEAP…PREDDGRPKR (82 aa)) are disordered. The span at 477 to 522 (EAAPGSASVHASATGPAATGQATAGPAAMGQAAAGPVSTGPAATGP) shows a compositional bias: low complexity.

This sequence belongs to the UvrC family. Interacts with UvrB in an incision complex.

The protein localises to the cytoplasm. In terms of biological role, the UvrABC repair system catalyzes the recognition and processing of DNA lesions. UvrC both incises the 5' and 3' sides of the lesion. The N-terminal half is responsible for the 3' incision and the C-terminal half is responsible for the 5' incision. This Streptomyces griseus subsp. griseus (strain JCM 4626 / CBS 651.72 / NBRC 13350 / KCC S-0626 / ISP 5235) protein is UvrABC system protein C.